Consider the following 452-residue polypeptide: Pup--protein ligase (452 aa).

Residue Glu9 participates in Mg(2+) binding. ATP is bound at residue Arg53. Tyr55 is a binding site for Mg(2+). Asp57 serves as the catalytic Proton acceptor. Glu63 provides a ligand contact to Mg(2+). ATP is bound by residues Thr66 and Trp419.

Belongs to the Pup ligase/Pup deamidase family. Pup-conjugating enzyme subfamily.

It carries out the reaction ATP + [prokaryotic ubiquitin-like protein]-L-glutamate + [protein]-L-lysine = ADP + phosphate + N(6)-([prokaryotic ubiquitin-like protein]-gamma-L-glutamyl)-[protein]-L-lysine.. The protein operates within protein degradation; proteasomal Pup-dependent pathway. It functions in the pathway protein modification; protein pupylation. In terms of biological role, catalyzes the covalent attachment of the prokaryotic ubiquitin-like protein modifier Pup to the proteasomal substrate proteins, thereby targeting them for proteasomal degradation. This tagging system is termed pupylation. The ligation reaction involves the side-chain carboxylate of the C-terminal glutamate of Pup and the side-chain amino group of a substrate lysine. The chain is Pup--protein ligase from Actinosynnema mirum (strain ATCC 29888 / DSM 43827 / JCM 3225 / NBRC 14064 / NCIMB 13271 / NRRL B-12336 / IMRU 3971 / 101).